The following is a 2079-amino-acid chain: von Willebrand factor A domain-containing protein DDB_G0286969 (2079 aa).

In terms of domain architecture, VIT spans 11–147 (EQILPSFISI…ELEIIITYST (137 aa)). The tract at residues 178 to 203 (NENSTTNTNTQTQPQSVNTTTTTTPS) is disordered. Low complexity predominate over residues 180 to 203 (NSTTNTNTQTQPQSVNTTTTTTPS). One can recognise a VWFA domain in the interval 354 to 525 (ELIFLVDVSE…KVMRQLKRAL (172 aa)). Disordered stretches follow at residues 761 to 800 (PTTL…LKTP), 832 to 866 (PFVP…TEVK), 956 to 1139 (AKPV…TKPT), 1155 to 1203 (NEPA…VSST), and 1239 to 1294 (DSNT…ADAE). Composition is skewed to low complexity over residues 785 to 800 (TTQQ…LKTP), 841 to 866 (PTTT…TEVK), and 956 to 973 (AKPV…QQTK). Residues 923 to 957 (EMIKIAEAKAAAEQKAAAEQKAIADAKAAAEQAAK) adopt a coiled-coil conformation. The span at 974-989 (PKADKQSKQNAKDNKQ) shows a compositional bias: basic and acidic residues. Over residues 992–1006 (KPVVVEQKPPVVTET) the composition is skewed to low complexity. Residues 1007-1021 (KPTVATESATPTKPT) show a composition bias toward polar residues. Residues 1023 to 1061 (AQAAAAAAAAAQQAAQQAAATTPVKQQPTKQTTPNKSTP) are compositionally biased toward low complexity. Basic and acidic residues predominate over residues 1092–1111 (KPVETKPVEQTKPVETKPVE). The span at 1176–1198 (NNNNNNNNNNNNNNNNNNNNNNN) shows a compositional bias: low complexity. Residues 1239 to 1272 (DSNTKAPDSLKTTPIFSNGPQGISPSSGNGSNKS) show a composition bias toward polar residues. Residues 1280–1292 (DRGGRGGRDRNAD) are compositionally biased toward basic and acidic residues. The MIF4G domain occupies 1317 to 1527 (LKKFKFNLNR…LDLIDLRANK (211 aa)). The segment at 1530-1755 (PKNSTQTKTK…PAPVEPVKPK (226 aa)) is disordered. Basic and acidic residues-rich tracts occupy residues 1538–1550 (TKKD…ERFI), 1557–1599 (QKRE…RDAP), and 1621–1634 (NNRD…DRSG). Low complexity-rich tracts occupy residues 1635–1659 (GKQS…LFGS) and 1688–1699 (SSSIPSIPNRSN). Over residues 1725 to 1740 (SNDRDSRGPSKPDNRK) the composition is skewed to basic and acidic residues. An MI domain is found at 1760–1882 (KIEDDISMTL…PLNYLEEAYA (123 aa)).

The protein is von Willebrand factor A domain-containing protein DDB_G0286969 of Dictyostelium discoideum (Social amoeba).